The chain runs to 123 residues: Non-specific lipid-transfer protein 3 (123 aa).

Positions methionine 1–proline 25 are cleaved as a signal peptide. 4 disulfide bridges follow: cysteine 33/cysteine 80, cysteine 43/cysteine 57, cysteine 58/cysteine 105, and cysteine 78/cysteine 119.

Belongs to the plant LTP family.

Functionally, plant non-specific lipid-transfer proteins transfer phospholipids as well as galactolipids across membranes. May play a role in wax or cutin deposition in the cell walls of expanding epidermal cells and certain secretory tissues. This Prunus dulcis (Almond) protein is Non-specific lipid-transfer protein 3.